Here is a 142-residue protein sequence, read N- to C-terminus: Large-conductance mechanosensitive channel (142 aa).

The next 3 helical transmembrane spans lie at 14–34 (VVDLAVGVIIGAAFGAIVNSL), 38–58 (VIMPIIGAITGGLDFSNYYIP), and 82–102 (GQFLTLAVNFTIIAFVLFMVI).

This sequence belongs to the MscL family. In terms of assembly, homopentamer.

It localises to the cell inner membrane. Channel that opens in response to stretch forces in the membrane lipid bilayer. May participate in the regulation of osmotic pressure changes within the cell. The sequence is that of Large-conductance mechanosensitive channel from Methylorubrum populi (strain ATCC BAA-705 / NCIMB 13946 / BJ001) (Methylobacterium populi).